Here is an 828-residue protein sequence, read N- to C-terminus: Protein kintoun (828 aa).

5 disordered regions span residues 1–31, 223–250, 383–424, 556–668, and 741–828; these read MSGS…DEPI, KNPT…EGEP, DSGV…PTSN, APVQ…HRGI, and KKNQ…EDLI. Residues 9–22 show a composition bias toward basic residues; sequence RNKHSKGNLKHNNN. Serine 384 is modified (phosphoserine). The span at 395–414 shows a compositional bias: acidic residues; that stretch reads PVEEEEDGEDEIEAEEEEEE. Residues 556-573 show a composition bias toward basic and acidic residues; the sequence is APVQEDKPGDIQFKRNDQ. A compositionally biased stretch (acidic residues) spans 591–601; sequence EREEGEIEEAE. The span at 606–620 shows a compositional bias: basic residues; it reads KKSASKKQRGKRNKK. Over residues 625–641 the composition is skewed to polar residues; the sequence is SESACVSLPTSVDSQPM. Over residues 741 to 755 the composition is skewed to basic residues; sequence KKNQKRRDCKLRAQQ. Serine 759 is modified (phosphoserine). The segment covering 788–808 has biased composition (basic and acidic residues); sequence DSGLDLTRHNKKRELAEEADN. Residues 815–828 show a composition bias toward acidic residues; that stretch reads EMDDDDDDEDEDLI.

This sequence belongs to the PIH1 family. Kintoun subfamily. Interacts with Pp1alpha-96A, Pp1-87B, Pp1-13C and flw.

It localises to the cytoplasm. Its function is as follows. Required for cytoplasmic pre-assembly of axonemal dyneins, thereby playing a central role in motility in cilia and flagella. Involved in pre-assembly of dynein arm complexes in the cytoplasm before intraflagellar transport loads them for the ciliary compartment. This Drosophila willistoni (Fruit fly) protein is Protein kintoun.